Consider the following 491-residue polypeptide: Malonate-semialdehyde dehydrogenase 1 (491 aa).

Alanine 154, phenylalanine 156, lysine 180, glutamate 183, arginine 184, serine 233, and threonine 255 together coordinate NAD(+). The Nucleophile role is filled by cysteine 288. Residue glutamate 386 participates in NAD(+) binding.

This sequence belongs to the aldehyde dehydrogenase family. IolA subfamily. As to quaternary structure, homotetramer.

It carries out the reaction 3-oxopropanoate + NAD(+) + CoA + H2O = hydrogencarbonate + acetyl-CoA + NADH + H(+). The enzyme catalyses 2-methyl-3-oxopropanoate + NAD(+) + CoA + H2O = propanoyl-CoA + hydrogencarbonate + NADH + H(+). It functions in the pathway polyol metabolism; myo-inositol degradation into acetyl-CoA; acetyl-CoA from myo-inositol: step 7/7. Catalyzes the oxidation of malonate semialdehyde (MSA) and methylmalonate semialdehyde (MMSA) into acetyl-CoA and propanoyl-CoA, respectively. Is involved in a myo-inositol catabolic pathway. Bicarbonate, and not CO2, is the end-product of the enzymatic reaction. In Shouchella clausii (strain KSM-K16) (Alkalihalobacillus clausii), this protein is Malonate-semialdehyde dehydrogenase 1.